The sequence spans 210 residues: Thymidylate kinase (210 aa).

10–17 is a binding site for ATP; that stretch reads GIDGCGKT.

This sequence belongs to the thymidylate kinase family.

The catalysed reaction is dTMP + ATP = dTDP + ADP. Its function is as follows. Phosphorylation of dTMP to form dTDP in both de novo and salvage pathways of dTTP synthesis. The sequence is that of Thymidylate kinase from Prochlorococcus marinus (strain MIT 9515).